Here is a 355-residue protein sequence, read N- to C-terminus: (3aS,4S,5R,7aS)-5-hydroxy-7a-methyl-1-oxo-octahydro-1H-indene-4-carboxyl-CoA dehydrogenase (355 aa).

FMN-binding positions include 21–23, 173–175, and 196–197; these read GMG, AGG, and GT.

The protein belongs to the nitronate monooxygenase family.

It carries out the reaction (3aS,4S,5R,7aS)-5-hydroxy-7a-methyl-1-oxo-octahydro-1H-indene-4-carboxyl-CoA + NAD(+) = (5R,7aS)-5-hydroxy-7a-methyl-1-oxo-2,3,5,6,7,7a-hexahydro-1H-indene-carboxyl-CoA + NADH + H(+). Its pathway is steroid metabolism; cholesterol degradation. With respect to regulation, requires the presence of IpdF. Its function is as follows. Involved in the final steps of cholesterol and steroid degradation. Probably catalyzes the introduction of a double bound into the C ring of 5OH-HIC-CoA, leading to the formation of (5R,7aS)-5-hydroxy-7a-methyl-1-oxo-3,5,6,7-tetrahydro-2H-indene-4-carboxyl-CoA. This chain is (3aS,4S,5R,7aS)-5-hydroxy-7a-methyl-1-oxo-octahydro-1H-indene-4-carboxyl-CoA dehydrogenase, found in Mycobacterium tuberculosis (strain ATCC 25618 / H37Rv).